Consider the following 1846-residue polypeptide: Peripheral-type benzodiazepine receptor-associated protein 1 (1846 aa).

Disordered regions lie at residues 57–97 (EESS…GYSC), 281–318 (NQRE…DDVE), and 560–628 (GPKD…SEVE). A compositionally biased stretch (polar residues) spans 576 to 587 (PKSSEPALTTLT). Over residues 599 to 612 (SLSNSSRSESIHNS) the composition is skewed to low complexity. Residues 649-716 (ARIQVFLARY…PSNFVERVSD (68 aa)) form the SH3 1 domain. The segment at 726–785 (ELADSSHSSGPELSFLSGGGGGCSSGGQSSGGRSQPRPEEEAAGDELSLSPPPEGLGEPL) is disordered. Residues 742 to 755 (SGGGGGCSSGGQSS) are compositionally biased toward gly residues. Fibronectin type-III domains are found at residues 787-878 (VPYP…AGAG), 880-972 (VPSQ…TLPA), and 977-1075 (APLD…PALA). Disordered regions lie at residues 1084–1107 (SCLS…GLGD), 1163–1219 (EPTL…LDSG), 1243–1302 (HSRN…SDEE), 1322–1476 (SIPE…PESS), 1492–1617 (YDSE…QDLP), 1704–1755 (LTEA…AAQK), and 1812–1846 (VPSN…RVQC). A compositionally biased stretch (basic and acidic residues) spans 1202-1219 (TQKKPSIEACHGGDLDSG). Over residues 1251-1265 (DIQEEEEEEEEEEEE) the composition is skewed to acidic residues. Positions 1270 to 1283 (PCSSQKQVAGNSIR) are enriched in polar residues. The span at 1324–1335 (PEEEEEEEEEEG) shows a compositional bias: acidic residues. 2 stretches are compositionally biased toward basic and acidic residues: residues 1411–1420 (RPQDPREHCS) and 1545–1577 (AWEK…ESRG). Residues 1616 to 1684 (LPVRVFVALF…PCNMVAEVAV (69 aa)) form the SH3 2 domain. Residues 1705-1719 (TEASGNGPSVYSSAH) are compositionally biased toward polar residues. Residues 1755–1822 (KTSRPMVAAF…PSNFLEGPGP (68 aa)) enclose the SH3 3 domain. The segment covering 1817-1830 (LEGPGPESGSLESG) has biased composition (low complexity).

This sequence belongs to the RIMBP family. As to quaternary structure, interacts with RIMS1 and RIMS2. Interacts with TSPO. Interacts with CACNA1A. As to expression, predominantly expressed in the brain.

It is found in the cytoplasm. The protein localises to the mitochondrion. In terms of biological role, required for synaptic transmission regulation. It probably controls the recruitement of voltage-gated calcium channels to the presynaptic membrane, and modulates neurotransmitter release. The chain is Peripheral-type benzodiazepine receptor-associated protein 1 from Mus musculus (Mouse).